A 140-amino-acid chain; its full sequence is Putative pre-16S rRNA nuclease (140 aa).

This sequence belongs to the YqgF nuclease family.

The protein resides in the cytoplasm. Functionally, could be a nuclease involved in processing of the 5'-end of pre-16S rRNA. The protein is Putative pre-16S rRNA nuclease of Chlorobium chlorochromatii (strain CaD3).